Consider the following 84-residue polypeptide: Putative membrane protein insertion efficiency factor (84 aa).

The protein belongs to the UPF0161 family.

It is found in the cell membrane. Could be involved in insertion of integral membrane proteins into the membrane. This chain is Putative membrane protein insertion efficiency factor, found in Staphylococcus carnosus (strain TM300).